Consider the following 849-residue polypeptide: Aminopeptidase N (849 aa).

Substrate-binding positions include E122 and 259 to 263 (GAMEN). Position 294 (H294) interacts with Zn(2+). E295 (proton acceptor) is an active-site residue. H298 and E317 together coordinate Zn(2+).

Belongs to the peptidase M1 family. In terms of assembly, monomer. The cofactor is Zn(2+).

The protein localises to the cytoplasm. It carries out the reaction Release of an N-terminal amino acid, Xaa-|-Yaa- from a peptide, amide or arylamide. Xaa is preferably Ala, but may be most amino acids including Pro (slow action). When a terminal hydrophobic residue is followed by a prolyl residue, the two may be released as an intact Xaa-Pro dipeptide.. Functionally, aminopeptidase with broad substrate specificity to several peptides. It has more affinity for oligopeptides than for dipeptides. It plays an essential role in the metabolism, it may be involved in nitrogen supply or protein turnover. The sequence is that of Aminopeptidase N (pepN) from Lactococcus lactis subsp. lactis (Streptococcus lactis).